We begin with the raw amino-acid sequence, 564 residues long: Transmembrane anterior posterior transformation protein 1 (564 aa).

Residues 1–10 (MAGVCDAAAP) show a composition bias toward low complexity. The segment at 1 to 55 (MAGVCDAAAPGEGGGGGADGPERTGRGEAEQPGGGGHGPAPQHTETLGFYESDRR) is disordered. Ala2 is subject to N-acetylalanine. Over residues 20–29 (GPERTGRGEA) the composition is skewed to basic and acidic residues. 6 helical membrane passes run 108–128 (LMFF…TLLP), 154–176 (PAQV…MHYV), 233–253 (IGVI…AILI), 332–352 (LWVL…VDIV), 400–420 (GFIP…SIKV), and 429–449 (VILF…VLLG). Residues 464–546 (LFNPPPASTP…ENSELKHRSS (83 aa)) form a disordered region. Low complexity predominate over residues 473–489 (PGKPSSKSQSKGKPSQG). Polar residues-rich tracts occupy residues 490-505 (LSTE…SQPG) and 516-525 (VTSNSDQFLT). Ser520 bears the Phosphoserine mark. A Phosphothreonine modification is found at Thr526. The segment covering 532–546 (KDITQENSELKHRSS) has biased composition (basic and acidic residues).

This sequence belongs to the TAPT1 family. In terms of tissue distribution, ubiquitous. Expressed throughout embryo.

The protein resides in the cytoplasm. The protein localises to the cytoskeleton. It is found in the microtubule organizing center. Its subcellular location is the centrosome. It localises to the cilium basal body. The protein resides in the membrane. Functionally, plays a role in primary cilia formation. May act as a downstream effector of HOXC8 possibly by transducing or transmitting extracellular information required for axial skeletal patterning during development. May be involved in cartilage and bone development. May play a role in the differentiation of cranial neural crest cells. This is Transmembrane anterior posterior transformation protein 1 (Tapt1) from Mus musculus (Mouse).